The primary structure comprises 174 residues: CDP-archaeol synthase (174 aa).

4 consecutive transmembrane segments (helical) span residues 51-71 (LIGL…AGFI), 74-94 (SLLV…ALLG), 112-132 (MLPI…TFLL), and 136-156 (WLLA…IPVF).

It belongs to the CDP-archaeol synthase family. Mg(2+) serves as cofactor.

It localises to the cell membrane. The enzyme catalyses 2,3-bis-O-(geranylgeranyl)-sn-glycerol 1-phosphate + CTP + H(+) = CDP-2,3-bis-O-(geranylgeranyl)-sn-glycerol + diphosphate. It participates in membrane lipid metabolism; glycerophospholipid metabolism. Its function is as follows. Catalyzes the formation of CDP-2,3-bis-(O-geranylgeranyl)-sn-glycerol (CDP-archaeol) from 2,3-bis-(O-geranylgeranyl)-sn-glycerol 1-phosphate (DGGGP) and CTP. This reaction is the third ether-bond-formation step in the biosynthesis of archaeal membrane lipids. The polypeptide is CDP-archaeol synthase (Methanocella arvoryzae (strain DSM 22066 / NBRC 105507 / MRE50)).